The following is a 257-amino-acid chain: 3-deoxy-manno-octulosonate cytidylyltransferase (257 aa).

Belongs to the KdsB family.

It is found in the cytoplasm. It carries out the reaction 3-deoxy-alpha-D-manno-oct-2-ulosonate + CTP = CMP-3-deoxy-beta-D-manno-octulosonate + diphosphate. Its pathway is nucleotide-sugar biosynthesis; CMP-3-deoxy-D-manno-octulosonate biosynthesis; CMP-3-deoxy-D-manno-octulosonate from 3-deoxy-D-manno-octulosonate and CTP: step 1/1. It participates in bacterial outer membrane biogenesis; lipopolysaccharide biosynthesis. Activates KDO (a required 8-carbon sugar) for incorporation into bacterial lipopolysaccharide in Gram-negative bacteria. In Rhodospirillum centenum (strain ATCC 51521 / SW), this protein is 3-deoxy-manno-octulosonate cytidylyltransferase.